The chain runs to 377 residues: Homoserine O-succinyltransferase (377 aa).

Positions 45 to 356 (NAVLVCHALN…PHGHDAFLLD (312 aa)) constitute an AB hydrolase-1 domain. Catalysis depends on Ser-151, which acts as the Nucleophile. Arg-221 is a substrate binding site. Catalysis depends on residues Asp-317 and His-350. Asp-351 is a substrate binding site.

This sequence belongs to the AB hydrolase superfamily. MetX family. As to quaternary structure, homodimer.

Its subcellular location is the cytoplasm. It catalyses the reaction L-homoserine + succinyl-CoA = O-succinyl-L-homoserine + CoA. Its pathway is amino-acid biosynthesis; L-methionine biosynthesis via de novo pathway; O-succinyl-L-homoserine from L-homoserine: step 1/1. Functionally, transfers a succinyl group from succinyl-CoA to L-homoserine, forming succinyl-L-homoserine. The chain is Homoserine O-succinyltransferase from Leptothrix cholodnii (strain ATCC 51168 / LMG 8142 / SP-6) (Leptothrix discophora (strain SP-6)).